The following is a 242-amino-acid chain: Immunity protein TsiV2 (242 aa).

3 helical membrane-spanning segments follow: residues 39-59 (VFGA…FADI), 66-86 (FWGF…LFMP), and 118-138 (FAWV…PLAF).

It localises to the host membrane. Immunity protein that plays a role in preventing early activation of toxin VasX. This Vibrio cholerae serotype O1 (strain ATCC 39315 / El Tor Inaba N16961) protein is Immunity protein TsiV2.